We begin with the raw amino-acid sequence, 74 residues long: Peptide BmKb1 (74 aa).

The first 22 residues, 1 to 22 (MEIKYLLTVFLVLLIVSDHCQA), serve as a signal peptide directing secretion. At Lys40 the chain carries Lysine amide. Positions 46–74 (DLNGYIDHFKNFRKRDAELEELLSKLPIY) are excised as a propeptide.

The protein belongs to the non-disulfide-bridged peptide (NDBP) superfamily. Short antimicrobial peptide (group 4) family. In terms of tissue distribution, expressed by the venom gland.

The protein localises to the secreted. It is found in the target cell membrane. Its function is as follows. Has antibacterial activity against Gram-positive bacteria S.aureus, M.luteus, B.subtilis, and Gram-negative bacteria E.coli, and P.aeruginosa. The polypeptide is Peptide BmKb1 (Olivierus martensii (Manchurian scorpion)).